A 136-amino-acid polypeptide reads, in one-letter code: Holo-[acyl-carrier-protein] synthase (136 aa).

The Mg(2+) site is built by D8 and E57.

This sequence belongs to the P-Pant transferase superfamily. AcpS family. Requires Mg(2+) as cofactor.

It is found in the cytoplasm. The catalysed reaction is apo-[ACP] + CoA = holo-[ACP] + adenosine 3',5'-bisphosphate + H(+). Functionally, transfers the 4'-phosphopantetheine moiety from coenzyme A to a Ser of acyl-carrier-protein. The chain is Holo-[acyl-carrier-protein] synthase from Methylorubrum populi (strain ATCC BAA-705 / NCIMB 13946 / BJ001) (Methylobacterium populi).